We begin with the raw amino-acid sequence, 292 residues long: D-galactarolactone isomerase (292 aa).

This sequence belongs to the metallo-dependent hydrolases superfamily. Does not require a metal cofactor. is required as a cofactor.

The enzyme catalyses D-galactaro-1,5-lactone = D-galactaro-1,4-lactone. Its pathway is carbohydrate acid metabolism; D-galacturonate degradation via prokaryotic oxidative pathway. Its function is as follows. Catalyzes the isomerization of D-galactaro-1,5-lactone to D-galactaro-1,4-lactone. This is a step in the oxidative degradation pathway of D-galacturonate, which allows A.tumefaciens to utilize D-galacturonate as a sole carbon source. This Agrobacterium fabrum (strain C58 / ATCC 33970) (Agrobacterium tumefaciens (strain C58)) protein is D-galactarolactone isomerase.